The chain runs to 241 residues: ATP synthase subunit a (241 aa).

The next 5 membrane-spanning stretches (helical) occupy residues Gly-30–Gly-50, Leu-89–Ile-109, Ile-128–Ser-148, Leu-193–Leu-213, and Gly-214–Gly-234.

This sequence belongs to the ATPase A chain family. F-type ATPases have 2 components, CF(1) - the catalytic core - and CF(0) - the membrane proton channel. CF(1) has five subunits: alpha(3), beta(3), gamma(1), delta(1), epsilon(1). CF(0) has four main subunits: a, b, b' and c.

It is found in the cellular thylakoid membrane. Its function is as follows. Key component of the proton channel; it plays a direct role in the translocation of protons across the membrane. The protein is ATP synthase subunit a of Synechococcus sp. (strain CC9311).